The following is a 76-amino-acid chain: Translational regulator CsrA (76 aa).

This sequence belongs to the CsrA/RsmA family. In terms of assembly, homodimer; the beta-strands of each monomer intercalate to form a hydrophobic core, while the alpha-helices form wings that extend away from the core.

Its subcellular location is the cytoplasm. A translational regulator that binds mRNA to regulate translation initiation and/or mRNA stability. Usually binds in the 5'-UTR at or near the Shine-Dalgarno sequence preventing ribosome-binding, thus repressing translation. Its main target seems to be the major flagellin gene, while its function is anatagonized by FliW. The chain is Translational regulator CsrA from Wolinella succinogenes (strain ATCC 29543 / DSM 1740 / CCUG 13145 / JCM 31913 / LMG 7466 / NCTC 11488 / FDC 602W) (Vibrio succinogenes).